The following is a 283-amino-acid chain: Shikimate dehydrogenase (NADP(+)) (283 aa).

Shikimate contacts are provided by residues 16–18 (SLS) and Thr-63. Catalysis depends on Lys-67, which acts as the Proton acceptor. Residue Asp-79 participates in NADP(+) binding. Residues Asn-88 and Asp-103 each coordinate shikimate. NADP(+)-binding positions include 128–132 (GAGGA) and Gly-243.

Belongs to the shikimate dehydrogenase family. As to quaternary structure, homodimer.

The catalysed reaction is shikimate + NADP(+) = 3-dehydroshikimate + NADPH + H(+). It participates in metabolic intermediate biosynthesis; chorismate biosynthesis; chorismate from D-erythrose 4-phosphate and phosphoenolpyruvate: step 4/7. Its function is as follows. Involved in the biosynthesis of the chorismate, which leads to the biosynthesis of aromatic amino acids. Catalyzes the reversible NADPH linked reduction of 3-dehydroshikimate (DHSA) to yield shikimate (SA). The polypeptide is Shikimate dehydrogenase (NADP(+)) (Xanthomonas euvesicatoria pv. vesicatoria (strain 85-10) (Xanthomonas campestris pv. vesicatoria)).